The chain runs to 427 residues: MILSCRSVATARGFLLSTRLIMGCAVSQESAIATVSSSSNTATTSTSSSNTSQKWATSRTSRPVTNVTQVSAIHTTSMDSGSSTVQLPSPRGSLTTAVSTSSSGAQRQMSANSERSLHTRPLSETAVILQSQAVKMSTGAGDSAVYEAVERGSLYSLDYRVYIKGPQGIVSPWHDIPLFANKDKRVYNMIVEIPRWTNAKMEMATKEPFSPIKQDEKKGVARFVHNIFPHKGYIWNYGALPQTWEDPNHVVPDTGAKGDNDPIDVIEVGSKVAGRGAVLQVKVLGTLALIDEGETDWKLVAIDVNDENADKLNDIDDVEKVYPGLLAASVEWFRNYKIPAGKPANEFAFNGEFKNREYAEKVIDETNEYWKTLIKEANPSLNTVSRVPEAVHQGTDEAAATAIGATPEHGANAPLPGDVDKWHFVQG.

Positions 36–52 (SSSSNTATTSTSSSNTS) are enriched in low complexity. 2 disordered regions span residues 36 to 63 (SSSS…TSRP) and 77 to 118 (SMDS…RSLH). Polar residues-rich tracts occupy residues 53–63 (QKWATSRTSRP) and 77–114 (SMDS…ANSE). Mg(2+) contacts are provided by aspartate 259, aspartate 264, and aspartate 296.

This sequence belongs to the PPase family. It depends on Mg(2+) as a cofactor. In terms of tissue distribution, expressed in coelomocytes, the intestine and in the nervous system including the nerve cords and sensory neurons.

Its subcellular location is the cytoplasm. It catalyses the reaction diphosphate + H2O = 2 phosphate + H(+). In terms of biological role, catalyzes the hydrolysis of inorganic pyrophosphate (PPi) forming two phosphate ions. Plays a role in intestinal development and subsequent normal secretory, digestive and absorption functions. Required for larval development. This Caenorhabditis elegans protein is Inorganic pyrophosphatase 1.